We begin with the raw amino-acid sequence, 144 residues long: UPF0735 ACT domain-containing protein LCABL_12100 (144 aa).

The region spanning 68–143 (VISLMLHHDR…GVSDVHLVSV (76 aa)) is the ACT domain.

The protein belongs to the UPF0735 family.

This Lacticaseibacillus casei (strain BL23) (Lactobacillus casei) protein is UPF0735 ACT domain-containing protein LCABL_12100.